Reading from the N-terminus, the 295-residue chain is Bifunctional protein FolD (295 aa).

NADP(+)-binding positions include 175-177 (GVS) and Ile243.

The protein belongs to the tetrahydrofolate dehydrogenase/cyclohydrolase family. As to quaternary structure, homodimer.

The enzyme catalyses (6R)-5,10-methylene-5,6,7,8-tetrahydrofolate + NADP(+) = (6R)-5,10-methenyltetrahydrofolate + NADPH. It carries out the reaction (6R)-5,10-methenyltetrahydrofolate + H2O = (6R)-10-formyltetrahydrofolate + H(+). It functions in the pathway one-carbon metabolism; tetrahydrofolate interconversion. Catalyzes the oxidation of 5,10-methylenetetrahydrofolate to 5,10-methenyltetrahydrofolate and then the hydrolysis of 5,10-methenyltetrahydrofolate to 10-formyltetrahydrofolate. The sequence is that of Bifunctional protein FolD from Xylella fastidiosa (strain 9a5c).